Here is a 417-residue protein sequence, read N- to C-terminus: NADH-quinone oxidoreductase subunit D (417 aa).

Belongs to the complex I 49 kDa subunit family. As to quaternary structure, NDH-1 is composed of 14 different subunits. Subunits NuoB, C, D, E, F, and G constitute the peripheral sector of the complex.

The protein resides in the cell inner membrane. The enzyme catalyses a quinone + NADH + 5 H(+)(in) = a quinol + NAD(+) + 4 H(+)(out). Its function is as follows. NDH-1 shuttles electrons from NADH, via FMN and iron-sulfur (Fe-S) centers, to quinones in the respiratory chain. The immediate electron acceptor for the enzyme in this species is believed to be ubiquinone. Couples the redox reaction to proton translocation (for every two electrons transferred, four hydrogen ions are translocated across the cytoplasmic membrane), and thus conserves the redox energy in a proton gradient. The chain is NADH-quinone oxidoreductase subunit D from Albidiferax ferrireducens (strain ATCC BAA-621 / DSM 15236 / T118) (Rhodoferax ferrireducens).